We begin with the raw amino-acid sequence, 345 residues long: UDP-N-acetylenolpyruvoylglucosamine reductase (345 aa).

The FAD-binding PCMH-type domain occupies 25–193 (LPAHCTDFVS…VGVTFLLPKA (169 aa)). R169 is an active-site residue. S237 functions as the Proton donor in the catalytic mechanism. Residue E333 is part of the active site.

It belongs to the MurB family. It depends on FAD as a cofactor.

Its subcellular location is the cytoplasm. It carries out the reaction UDP-N-acetyl-alpha-D-muramate + NADP(+) = UDP-N-acetyl-3-O-(1-carboxyvinyl)-alpha-D-glucosamine + NADPH + H(+). The protein operates within cell wall biogenesis; peptidoglycan biosynthesis. Functionally, cell wall formation. This chain is UDP-N-acetylenolpyruvoylglucosamine reductase, found in Pseudoalteromonas atlantica (strain T6c / ATCC BAA-1087).